Reading from the N-terminus, the 166-residue chain is NAD(P)H-quinone oxidoreductase subunit I, chloroplastic (166 aa).

2 4Fe-4S ferredoxin-type domains span residues 55-84 (GRIH…VDWK) and 95-124 (LNYS…MTEE). [4Fe-4S] cluster is bound by residues Cys-64, Cys-67, Cys-70, Cys-74, Cys-104, Cys-107, Cys-110, and Cys-114.

It belongs to the complex I 23 kDa subunit family. In terms of assembly, NDH is composed of at least 16 different subunits, 5 of which are encoded in the nucleus. The cofactor is [4Fe-4S] cluster.

The protein resides in the plastid. Its subcellular location is the chloroplast thylakoid membrane. The catalysed reaction is a plastoquinone + NADH + (n+1) H(+)(in) = a plastoquinol + NAD(+) + n H(+)(out). The enzyme catalyses a plastoquinone + NADPH + (n+1) H(+)(in) = a plastoquinol + NADP(+) + n H(+)(out). In terms of biological role, NDH shuttles electrons from NAD(P)H:plastoquinone, via FMN and iron-sulfur (Fe-S) centers, to quinones in the photosynthetic chain and possibly in a chloroplast respiratory chain. The immediate electron acceptor for the enzyme in this species is believed to be plastoquinone. Couples the redox reaction to proton translocation, and thus conserves the redox energy in a proton gradient. The polypeptide is NAD(P)H-quinone oxidoreductase subunit I, chloroplastic (Parthenium hysterophorus (Santa Maria feverfew)).